A 76-amino-acid chain; its full sequence is UPF0346 protein lhv_1069 (76 aa).

This sequence belongs to the UPF0346 family.

The polypeptide is UPF0346 protein lhv_1069 (Lactobacillus helveticus (strain DPC 4571)).